The following is a 313-amino-acid chain: Glutaminase (313 aa).

Substrate-binding residues include S64, N116, E163, N170, Y194, Y246, and V264.

This sequence belongs to the glutaminase family. Homotetramer.

The catalysed reaction is L-glutamine + H2O = L-glutamate + NH4(+). This Exiguobacterium sp. (strain ATCC BAA-1283 / AT1b) protein is Glutaminase.